Reading from the N-terminus, the 308-residue chain is Methionyl-tRNA formyltransferase (308 aa).

109–112 (SLLP) is a (6S)-5,6,7,8-tetrahydrofolate binding site.

The protein belongs to the Fmt family.

The enzyme catalyses L-methionyl-tRNA(fMet) + (6R)-10-formyltetrahydrofolate = N-formyl-L-methionyl-tRNA(fMet) + (6S)-5,6,7,8-tetrahydrofolate + H(+). Attaches a formyl group to the free amino group of methionyl-tRNA(fMet). The formyl group appears to play a dual role in the initiator identity of N-formylmethionyl-tRNA by promoting its recognition by IF2 and preventing the misappropriation of this tRNA by the elongation apparatus. In Phenylobacterium zucineum (strain HLK1), this protein is Methionyl-tRNA formyltransferase.